Consider the following 468-residue polypeptide: 3-isopropylmalate dehydratase large subunit (468 aa).

[4Fe-4S] cluster contacts are provided by Cys347, Cys407, and Cys410.

It belongs to the aconitase/IPM isomerase family. LeuC type 1 subfamily. As to quaternary structure, heterodimer of LeuC and LeuD. [4Fe-4S] cluster is required as a cofactor.

It carries out the reaction (2R,3S)-3-isopropylmalate = (2S)-2-isopropylmalate. It participates in amino-acid biosynthesis; L-leucine biosynthesis; L-leucine from 3-methyl-2-oxobutanoate: step 2/4. Its function is as follows. Catalyzes the isomerization between 2-isopropylmalate and 3-isopropylmalate, via the formation of 2-isopropylmaleate. In Glaesserella parasuis serovar 5 (strain SH0165) (Haemophilus parasuis), this protein is 3-isopropylmalate dehydratase large subunit.